The primary structure comprises 514 residues: Contact site A protein (514 aa).

The N-terminal stretch at 1-19 (MKFLLVLIILYNILNSAHS) is a signal peptide. Residues 20–453 (APTITAVSNG…EATTSTTYTI (434 aa)) form a globular region. The 84-residue stretch at 21-104 (PTITAVSNGK…TGGNGLFKYT (84 aa)) folds into the IPT/TIG 1 domain. 5 N-linked (GlcNAc...) asparagine glycosylation sites follow: asparagine 128, asparagine 137, asparagine 207, asparagine 294, and asparagine 399. The 93-residue stretch at 191-283 (PTITSITPLA…NQQPITFTYN (93 aa)) folds into the IPT/TIG 2 domain. 2 stretches are compositionally biased toward low complexity: residues 446–475 (TTST…TATP) and 483–494 (STPEETEAPSSA). The interval 446-494 (TTSTTYTIPDTPTPTDTATPSPTPTETATPSPTPKPTSTPEETEAPSSA) is disordered. 2 tandem repeats follow at residues 462–469 (TATPSPTP) and 472–479 (TATPSPTP). The tract at residues 462 to 479 (TATPSPTPTETATPSPTP) is 2 X 8 AA repeats, Pro-rich. Serine 492 is lipidated: GPI-like-anchor amidated serine. Positions 493–514 (SATTLISPLSLIVIFISFVLLI) are cleaved as a propeptide — removed in mature form.

Phosphorylated on serine and N-glycosylated with two types of oligosaccharide chains. In terms of processing, the GPI-like-anchor contains a phosphoceramide group, rather than a phosphatidyl group.

Its subcellular location is the cell membrane. Functionally, this cell-surface glycoprotein mediates cell-cell binding via homophilic interaction. This chain is Contact site A protein (csaA), found in Dictyostelium discoideum (Social amoeba).